The sequence spans 70 residues: Small ribosomal subunit protein bS21 (70 aa).

Belongs to the bacterial ribosomal protein bS21 family.

This chain is Small ribosomal subunit protein bS21 (rpsU), found in Helicobacter pylori (strain J99 / ATCC 700824) (Campylobacter pylori J99).